The chain runs to 72 residues: Large ribosomal subunit protein bL31 (72 aa).

Zn(2+) contacts are provided by Cys16, Cys18, Cys38, and Cys41.

It belongs to the bacterial ribosomal protein bL31 family. Type A subfamily. Part of the 50S ribosomal subunit. It depends on Zn(2+) as a cofactor.

Its function is as follows. Binds the 23S rRNA. In Francisella tularensis subsp. holarctica (strain LVS), this protein is Large ribosomal subunit protein bL31.